Here is a 108-residue protein sequence, read N- to C-terminus: UPF0060 membrane protein Sputw3181_1172 (108 aa).

Helical transmembrane passes span 3-23, 31-51, 63-83, and 87-107; these read VITTLGLFIITAIAEIVGCYL, GASAWVLLPAAISLALFAWLL, AAYGGVYVTIAIVWLWGVDGI, and RWDLAGVVLMLAGMAVIMFAP.

It belongs to the UPF0060 family.

The protein localises to the cell inner membrane. In Shewanella sp. (strain W3-18-1), this protein is UPF0060 membrane protein Sputw3181_1172.